The chain runs to 1399 residues: DNA-directed RNA polymerase subunit beta' (1399 aa).

The Zn(2+) site is built by Cys-70, Cys-72, Cys-85, and Cys-88. 3 residues coordinate Mg(2+): Asp-460, Asp-462, and Asp-464. Zn(2+)-binding residues include Cys-814, Cys-888, Cys-895, and Cys-898.

This sequence belongs to the RNA polymerase beta' chain family. The RNAP catalytic core consists of 2 alpha, 1 beta, 1 beta' and 1 omega subunit. When a sigma factor is associated with the core the holoenzyme is formed, which can initiate transcription. Mg(2+) serves as cofactor. It depends on Zn(2+) as a cofactor.

It catalyses the reaction RNA(n) + a ribonucleoside 5'-triphosphate = RNA(n+1) + diphosphate. DNA-dependent RNA polymerase catalyzes the transcription of DNA into RNA using the four ribonucleoside triphosphates as substrates. This is DNA-directed RNA polymerase subunit beta' from Pseudomonas putida (strain ATCC 47054 / DSM 6125 / CFBP 8728 / NCIMB 11950 / KT2440).